The chain runs to 298 residues: Beta-1,3-galactosyltransferase 5 (298 aa).

At 1–7 the chain is on the cytoplasmic side; that stretch reads MAFPKMR. The chain crosses the membrane as a helical; Signal-anchor for type II membrane protein span at residues 8–28; sequence LMYICLLVLGALCLYFSMYSL. The Lumenal portion of the chain corresponds to 29–298; it reads NPFKEQSFVY…PRTLLDYWQA (270 aa). Asn-130, Asn-174, and Asn-231 each carry an N-linked (GlcNAc...) asparagine glycan.

This sequence belongs to the glycosyltransferase 31 family.

The protein resides in the golgi apparatus membrane. It carries out the reaction a globoside Gb4Cer (d18:1(4E)) + UDP-alpha-D-galactose = a globoside GalGb4Cer (d18:1(4E)) + UDP + H(+). It functions in the pathway protein modification; protein glycosylation. Its function is as follows. Catalyzes the transfer of Gal to GlcNAc-based acceptors with a preference for the core3 O-linked glycan GlcNAc(beta1,3)GalNAc structure. Can use glycolipid LC3Cer as an efficient acceptor. The protein is Beta-1,3-galactosyltransferase 5 (B3GALT5) of Gorilla gorilla gorilla (Western lowland gorilla).